Here is a 445-residue protein sequence, read N- to C-terminus: Phosphoglucosamine mutase (445 aa).

The Phosphoserine intermediate role is filled by Ser-99. Mg(2+)-binding residues include Ser-99, Asp-242, Asp-244, and Asp-246. Ser-99 carries the phosphoserine modification.

It belongs to the phosphohexose mutase family. It depends on Mg(2+) as a cofactor. In terms of processing, activated by phosphorylation.

The catalysed reaction is alpha-D-glucosamine 1-phosphate = D-glucosamine 6-phosphate. Catalyzes the conversion of glucosamine-6-phosphate to glucosamine-1-phosphate. This chain is Phosphoglucosamine mutase, found in Helicobacter pylori (strain Shi470).